Here is a 503-residue protein sequence, read N- to C-terminus: U6 snRNA (guanine-N(2))-methyltransferase THUMPD2 (503 aa).

In terms of domain architecture, THUMP spans 161 to 266 (CQLEKQIKEE…DIYSVVGIPV (106 aa)).

This sequence belongs to the methyltransferase superfamily. Part of the heterodimeric THUMPD2-TRM112 methyltransferase complex; this complex forms an active tRNA methyltransferase, where TRMT112 acts as an activator of the catalytic subunit THUMPD2. In terms of tissue distribution, expressed in a variety of tissues including brain, colon, gingiva, heart, kidney, liver, lung, placenta, small intestine, spleen and thymus.

The protein resides in the nucleus. The enzyme catalyses guanosine in U6 snRNA + S-adenosyl-L-methionine = N(2)-methylguanosine in U6 snRNA + S-adenosyl-L-homocysteine + H(+). Functionally, catalytic subunit of the THUMPD2-TRM112 methyltransferase complex, that specifically mediates the S-adenosyl-L-methionine-dependent N(2)-methylation of guanosine nucleotides, most probably at position 72 (m2G72), in the U6snRNA of the major spliceosome. This modification in the U6 snRNA affects the constitutive splicing efficiency of introns that have suboptimal splice sites and can impact final mRNA levels. The sequence is that of U6 snRNA (guanine-N(2))-methyltransferase THUMPD2 from Homo sapiens (Human).